The primary structure comprises 81 residues: Putative defensin-like protein 148 (81 aa).

The first 24 residues, Met-1–Gly-24, serve as a signal peptide directing secretion. Disulfide bonds link Cys-34–Cys-80, Cys-43–Cys-63, Cys-48–Cys-74, and Cys-52–Cys-76.

The protein belongs to the DEFL family.

The protein localises to the secreted. The chain is Putative defensin-like protein 148 (LCR4) from Arabidopsis thaliana (Mouse-ear cress).